A 344-amino-acid polypeptide reads, in one-letter code: Golgi-associated RAB2 interactor protein 1B (344 aa).

Belongs to the GARIN family.

It localises to the golgi apparatus. Functionally, RAB2B effector protein required for accurate acrosome formation and normal male fertility. In complex with RAB2A/RAB2B, seems to suppress excessive vesicle trafficking during acrosome formation. This Rattus norvegicus (Rat) protein is Golgi-associated RAB2 interactor protein 1B (Garin1b).